Reading from the N-terminus, the 163-residue chain is Phosphopantetheine adenylyltransferase (163 aa).

Threonine 10 contributes to the substrate binding site. ATP contacts are provided by residues 10-11 and histidine 18; that span reads TF. The substrate site is built by lysine 42, leucine 74, and arginine 88. Residues 89-91, glutamate 99, and 124-130 contribute to the ATP site; these read GLR and NSFISST.

It belongs to the bacterial CoaD family. In terms of assembly, homohexamer. Mg(2+) serves as cofactor.

Its subcellular location is the cytoplasm. It catalyses the reaction (R)-4'-phosphopantetheine + ATP + H(+) = 3'-dephospho-CoA + diphosphate. The protein operates within cofactor biosynthesis; coenzyme A biosynthesis; CoA from (R)-pantothenate: step 4/5. Reversibly transfers an adenylyl group from ATP to 4'-phosphopantetheine, yielding dephospho-CoA (dPCoA) and pyrophosphate. In Shewanella sp. (strain W3-18-1), this protein is Phosphopantetheine adenylyltransferase.